Here is a 332-residue protein sequence, read N- to C-terminus: Tetraacyldisaccharide 4'-kinase (332 aa).

60–67 (TVGGTGKT) provides a ligand contact to ATP.

Belongs to the LpxK family.

It catalyses the reaction a lipid A disaccharide + ATP = a lipid IVA + ADP + H(+). It participates in glycolipid biosynthesis; lipid IV(A) biosynthesis; lipid IV(A) from (3R)-3-hydroxytetradecanoyl-[acyl-carrier-protein] and UDP-N-acetyl-alpha-D-glucosamine: step 6/6. Transfers the gamma-phosphate of ATP to the 4'-position of a tetraacyldisaccharide 1-phosphate intermediate (termed DS-1-P) to form tetraacyldisaccharide 1,4'-bis-phosphate (lipid IVA). This is Tetraacyldisaccharide 4'-kinase from Pseudomonas paraeruginosa (strain DSM 24068 / PA7) (Pseudomonas aeruginosa (strain PA7)).